A 122-amino-acid polypeptide reads, in one-letter code: Large ribosomal subunit protein bL12 (122 aa).

The protein belongs to the bacterial ribosomal protein bL12 family. Homodimer. Part of the ribosomal stalk of the 50S ribosomal subunit. Forms a multimeric L10(L12)X complex, where L10 forms an elongated spine to which 2 to 4 L12 dimers bind in a sequential fashion. Binds GTP-bound translation factors.

Functionally, forms part of the ribosomal stalk which helps the ribosome interact with GTP-bound translation factors. Is thus essential for accurate translation. The polypeptide is Large ribosomal subunit protein bL12 (Borrelia hermsii (strain HS1 / DAH)).